We begin with the raw amino-acid sequence, 301 residues long: Rhodopsin (301 aa).

Residues 1–18 (LHMIHLHWYQYPPMNPMM) are Extracellular-facing. Residues 19 to 43 (YPLLLIFMFITGIPCLAGNFVTIWV) traverse the membrane as a helical segment. Topologically, residues 44-55 (FMTTKSLRSPAN) are cytoplasmic. The helical transmembrane segment at 56 to 78 (LLVVNLAMSDFLMMFTMFPPMMI) threads the bilayer. The Extracellular portion of the chain corresponds to 79–92 (TCYYHTWTLGPTFC). Residues Cys92 and Cys169 are joined by a disulfide bond. The chain crosses the membrane as a helical span at residues 93-115 (QVYAFLGNLFGCTSIWTMVFITF). A 'Ionic lock' involved in activated form stabilization motif is present at residues 116 to 118 (DRY). Residues 116–134 (DRYNVIVKGVAGEPLSNKK) lie on the Cytoplasmic side of the membrane. The chain crosses the membrane as a helical span at residues 135-155 (AALWILSAWVLSFSWCSAPFF). Topologically, residues 156–182 (GWNRYVPEGNLTGCGTDYLSEDALSRS) are extracellular. N-linked (GlcNAc...) asparagine glycosylation is present at Asn165. The helical transmembrane segment at 183–204 (YLYVYSVWVYFLPLLITIYCYV) threads the bilayer. The Cytoplasmic portion of the chain corresponds to 205–245 (FIIKAVAAHEKGMRDQAKKMGIKSLRNEEAQKTSAECRLAK). Residues 246–267 (IAMTTVALWFIAWTPYLLINWV) form a helical membrane-spanning segment. At 268–278 (GMFARSYLSPV) the chain is on the extracellular side. A helical membrane pass occupies residues 279-300 (YTIWGYVFAKANAVYNPIVYAI). Lys288 is modified (N6-(retinylidene)lysine).

The protein belongs to the G-protein coupled receptor 1 family. Opsin subfamily. As to quaternary structure, homodimer. Interacts with GNAQ. Post-translationally, contains one covalently linked retinal chromophore.

It is found in the cell projection. It localises to the rhabdomere membrane. Functionally, photoreceptor required for image-forming vision at low light intensity. Can use both retinal and 3-dehydroretinal as visual pigment. Light-induced isomerization of 11-cis to all-trans retinal triggers a conformational change that activates signaling via G-proteins. Signaling via GNAQ probably mediates the activation of phospholipase C. This is Rhodopsin (RHO) from Cambarellus shufeldtii (Cajun dwarf crayfish).